A 354-amino-acid polypeptide reads, in one-letter code: Uroporphyrinogen decarboxylase (354 aa).

Substrate is bound by residues 27 to 31, Asp-77, Tyr-154, Thr-209, and His-327; that span reads RQAGR.

It belongs to the uroporphyrinogen decarboxylase family. As to quaternary structure, homodimer.

It localises to the cytoplasm. The enzyme catalyses uroporphyrinogen III + 4 H(+) = coproporphyrinogen III + 4 CO2. The protein operates within porphyrin-containing compound metabolism; protoporphyrin-IX biosynthesis; coproporphyrinogen-III from 5-aminolevulinate: step 4/4. Its function is as follows. Catalyzes the decarboxylation of four acetate groups of uroporphyrinogen-III to yield coproporphyrinogen-III. This Shigella dysenteriae serotype 1 (strain Sd197) protein is Uroporphyrinogen decarboxylase.